We begin with the raw amino-acid sequence, 938 residues long: Isoleucine--tRNA ligase (938 aa).

A 'HIGH' region motif is present at residues 58-68; that stretch reads PYANGSIHIGH. Lysine 183 is modified (N6-acetyllysine). Glutamate 561 serves as a coordination point for L-isoleucyl-5'-AMP. The 'KMSKS' region signature appears at 602–606; sequence KMSKS. Lysine 605 is a binding site for ATP. Zn(2+) contacts are provided by cysteine 901, cysteine 904, cysteine 921, and cysteine 924.

Belongs to the class-I aminoacyl-tRNA synthetase family. IleS type 1 subfamily. As to quaternary structure, monomer. Requires Zn(2+) as cofactor.

The protein localises to the cytoplasm. It carries out the reaction tRNA(Ile) + L-isoleucine + ATP = L-isoleucyl-tRNA(Ile) + AMP + diphosphate. Its function is as follows. Catalyzes the attachment of isoleucine to tRNA(Ile). As IleRS can inadvertently accommodate and process structurally similar amino acids such as valine, to avoid such errors it has two additional distinct tRNA(Ile)-dependent editing activities. One activity is designated as 'pretransfer' editing and involves the hydrolysis of activated Val-AMP. The other activity is designated 'posttransfer' editing and involves deacylation of mischarged Val-tRNA(Ile). The sequence is that of Isoleucine--tRNA ligase from Escherichia coli O45:K1 (strain S88 / ExPEC).